The primary structure comprises 494 residues: MSTEQLPPDLRRVHMVGIGGAGMSGIARILLDRGGLVSGSDAKESRGVHALRARGALIRIGHDASSLDLLPGGATAVVTTHAAIPKTNPELVEARRRGIPVVLRPAVLAKLMAGRTTLMVTGTHGKTTTTSMLIVALQHCGLDPSFAVGGELGEAGTNAHHGSGDCFVAEADESDGSLLQYTPHVAVITNIESDHLDFYGSVEAYVAVFDSFVERIVPGGALVVCTDDPGGAALAQRATELGIRVLRYGSVPGETMAATLVSWQQQGVGAVAHIRLASELATAQGPRVMRLSVPGRHMALNALGALLAAVQIGAPADEVLDGLAGFEGVRRRFELVGTCGVGKASVRVFDDYAHHPTEISATLAAARMVLEQGDGGRCMVVFQPHLYSRTKAFAAEFGRALNAADEVFVLDVYGAREQPLAGVSGASVAEHVTVPMRYVPDFSAVAQQVAAAASPGDVIVTMGAGDVTLLGPEILTALRVRANRSAPGRPGVLG.

122–128 is an ATP binding site; sequence GTHGKTT.

This sequence belongs to the MurCDEF family.

Its subcellular location is the cytoplasm. The enzyme catalyses UDP-N-acetyl-alpha-D-muramate + L-alanine + ATP = UDP-N-acetyl-alpha-D-muramoyl-L-alanine + ADP + phosphate + H(+). The protein operates within cell wall biogenesis; peptidoglycan biosynthesis. In terms of biological role, cell wall formation. This is UDP-N-acetylmuramate--L-alanine ligase from Mycobacterium bovis (strain ATCC BAA-935 / AF2122/97).